The chain runs to 480 residues: MALTLGTKKKVCYYYDGDVGNYYYGQGHPMKPHRIRMTHNLLLNYGLYRKMEIFRPHKASAEDMTKYHSDDYIKFLRSIRPDNMSEYSKQMQRFNVGEDCPVFDGLFEFCQLSAGGSVASAVKLNKQQTDISVNWSGGLHHAKKSEASGFCYVNDIVLAILELLKYHQRVVYIDIDIHHGDGVEEAFYTTDRVMTVSFHKYGEYFPGTGDLRDIGAGKGKYYAVNYALRDGIDDESYEAIFKPVMSKVMEMFQPSAVVLQCGADSLSGDRLGCFNLTIKGHAKCVEFIKTFNLPLLMLGGGGYTIRNVARCWTYETAVALDSEIPNELPYNDYFEYFGPDFKLHISPSNMTNQNTNEYLEKIKQRLFENLRMLPHAPGVQMQAVAEDSIHDDSGEEDEDDPDKRISIRSSDKRIACDEEFSDSEDEGEGGRKNVANFKKVKRVKTEEEKEGEDKKDVKEEEKAKDEKTDSKRVKEETKSV.

A histone deacetylase region spans residues 10–321 (KVCYYYDGDV…WTYETAVALD (312 aa)). His-141 is an active-site residue. The interval 388–480 (SIHDDSGEED…KRVKEETKSV (93 aa)) is disordered. The span at 401 to 416 (PDKRISIRSSDKRIAC) shows a compositional bias: basic and acidic residues. Positions 417-427 (DEEFSDSEDEG) are enriched in acidic residues. A compositionally biased stretch (basic and acidic residues) spans 443 to 480 (VKTEEEKEGEDKKDVKEEEKAKDEKTDSKRVKEETKSV).

Belongs to the histone deacetylase family. HD type 1 subfamily. As to quaternary structure, part of a large multiprotein complex that also contains RBBP4. Oocyte.

Its subcellular location is the nucleus. It is found in the cytoplasm. It carries out the reaction N(6)-acetyl-L-lysyl-[histone] + H2O = L-lysyl-[histone] + acetate. The enzyme catalyses N(6)-acetyl-L-lysyl-[protein] + H2O = L-lysyl-[protein] + acetate. The catalysed reaction is N(6)-(2E)-butenoyl-L-lysyl-[protein] + H2O = (2E)-2-butenoate + L-lysyl-[protein]. Histone deacetylase that catalyzes the deacetylation of lysine residues on the N-terminal part of the core histones (H2A, H2B, H3 and H4). Histone deacetylation gives a tag for epigenetic repression and plays an important role in transcriptional regulation, cell cycle progression and developmental events. Histone deacetylases act via the formation of large multiprotein complexes. Also functions as deacetylase for non-histone proteins. In addition to protein deacetylase activity, also has protein-lysine deacylase activity: acts as a protein decrotonylase by mediating decrotonylation ((2E)-butenoyl) of histones. This is Probable histone deacetylase 1-A (hdac1-a) from Xenopus laevis (African clawed frog).